The sequence spans 336 residues: Cytosolic 5'-nucleotidase 3A (336 aa).

The Nucleophile role is filled by aspartate 88. Mg(2+) is bound by residues aspartate 88 and aspartate 90. Aspartate 90 functions as the Proton donor in the catalytic mechanism. Residue glutamate 135 participates in CMP binding. N(7)-methyl-GMP is bound by residues glutamate 135 and serine 156. Substrate-binding positions include 203-204 (SA) and lysine 252. Aspartate 277 is a Mg(2+) binding site. The residue at position 278 (serine 278) is a Phosphoserine.

This sequence belongs to the pyrimidine 5'-nucleotidase family. As to quaternary structure, monomer. In terms of tissue distribution, isoforms 1, 3 and 4 are expressed in reticulocytes. Isoform 4 is hardly detectable in bone marrow and fetal liver.

Its subcellular location is the cytoplasm. The protein localises to the endoplasmic reticulum. It carries out the reaction N(7)-methyl-GMP + H2O = N(7)-methylguanosine + phosphate. The catalysed reaction is CMP + H2O = cytidine + phosphate. The enzyme catalyses a ribonucleoside 5'-phosphate + H2O = a ribonucleoside + phosphate. Functionally, nucleotidase which shows specific activity towards cytidine monophosphate (CMP) and 7-methylguanosine monophosphate (m(7)GMP). CMP seems to be the preferred substrate. This chain is Cytosolic 5'-nucleotidase 3A (NT5C3A), found in Homo sapiens (Human).